A 264-amino-acid polypeptide reads, in one-letter code: tRNA pseudouridine synthase A (264 aa).

The active-site Nucleophile is the Asp51. Residue Tyr109 coordinates substrate.

The protein belongs to the tRNA pseudouridine synthase TruA family. As to quaternary structure, homodimer.

It catalyses the reaction uridine(38/39/40) in tRNA = pseudouridine(38/39/40) in tRNA. Its function is as follows. Formation of pseudouridine at positions 38, 39 and 40 in the anticodon stem and loop of transfer RNAs. In Pasteurella multocida (strain Pm70), this protein is tRNA pseudouridine synthase A.